The chain runs to 437 residues: Serine--tRNA ligase (437 aa).

227 to 229 (TAE) contributes to the L-serine binding site. ATP contacts are provided by residues 258–260 (RSE) and valine 274. Glutamate 281 provides a ligand contact to L-serine. Residue 347-350 (ETHS) coordinates ATP. Threonine 382 is a binding site for L-serine.

It belongs to the class-II aminoacyl-tRNA synthetase family. Type-1 seryl-tRNA synthetase subfamily. In terms of assembly, homodimer. The tRNA molecule binds across the dimer.

It is found in the cytoplasm. It catalyses the reaction tRNA(Ser) + L-serine + ATP = L-seryl-tRNA(Ser) + AMP + diphosphate + H(+). The catalysed reaction is tRNA(Sec) + L-serine + ATP = L-seryl-tRNA(Sec) + AMP + diphosphate + H(+). The protein operates within aminoacyl-tRNA biosynthesis; selenocysteinyl-tRNA(Sec) biosynthesis; L-seryl-tRNA(Sec) from L-serine and tRNA(Sec): step 1/1. In terms of biological role, catalyzes the attachment of serine to tRNA(Ser). Is also able to aminoacylate tRNA(Sec) with serine, to form the misacylated tRNA L-seryl-tRNA(Sec), which will be further converted into selenocysteinyl-tRNA(Sec). The chain is Serine--tRNA ligase from Deinococcus geothermalis (strain DSM 11300 / CIP 105573 / AG-3a).